The following is a 505-amino-acid chain: Aspartyl/glutamyl-tRNA(Asn/Gln) amidotransferase subunit B (505 aa).

It belongs to the GatB/GatE family. GatB subfamily. Heterotrimer of A, B and C subunits.

It carries out the reaction L-glutamyl-tRNA(Gln) + L-glutamine + ATP + H2O = L-glutaminyl-tRNA(Gln) + L-glutamate + ADP + phosphate + H(+). The enzyme catalyses L-aspartyl-tRNA(Asn) + L-glutamine + ATP + H2O = L-asparaginyl-tRNA(Asn) + L-glutamate + ADP + phosphate + 2 H(+). Allows the formation of correctly charged Asn-tRNA(Asn) or Gln-tRNA(Gln) through the transamidation of misacylated Asp-tRNA(Asn) or Glu-tRNA(Gln) in organisms which lack either or both of asparaginyl-tRNA or glutaminyl-tRNA synthetases. The reaction takes place in the presence of glutamine and ATP through an activated phospho-Asp-tRNA(Asn) or phospho-Glu-tRNA(Gln). This Haloarcula marismortui (strain ATCC 43049 / DSM 3752 / JCM 8966 / VKM B-1809) (Halobacterium marismortui) protein is Aspartyl/glutamyl-tRNA(Asn/Gln) amidotransferase subunit B.